Reading from the N-terminus, the 570-residue chain is Urease subunit alpha (570 aa).

Positions 131 to 570 (GGVDTHIHFI…LPMAQRYFLF (440 aa)) constitute a Urease domain. Ni(2+) contacts are provided by His-136, His-138, and Lys-219. Lys-219 bears the N6-carboxylysine mark. His-221 serves as a coordination point for substrate. His-248 and His-274 together coordinate Ni(2+). His-322 (proton donor) is an active-site residue. Asp-362 provides a ligand contact to Ni(2+).

It belongs to the metallo-dependent hydrolases superfamily. Urease alpha subunit family. Heterotrimer of UreA (gamma), UreB (beta) and UreC (alpha) subunits. Three heterotrimers associate to form the active enzyme. Ni cation serves as cofactor. Carboxylation allows a single lysine to coordinate two nickel ions.

It localises to the cytoplasm. The catalysed reaction is urea + 2 H2O + H(+) = hydrogencarbonate + 2 NH4(+). It functions in the pathway nitrogen metabolism; urea degradation; CO(2) and NH(3) from urea (urease route): step 1/1. The chain is Urease subunit alpha from Methylocella silvestris (strain DSM 15510 / CIP 108128 / LMG 27833 / NCIMB 13906 / BL2).